A 270-amino-acid polypeptide reads, in one-letter code: Purine nucleoside phosphorylase BT_4389 (270 aa).

Residues histidine 79, cysteine 124, and histidine 141 each contribute to the Zn(2+) site.

This sequence belongs to the purine nucleoside phosphorylase YfiH/LACC1 family. In terms of assembly, homodimer. The cofactor is Cu(2+). Zn(2+) serves as cofactor.

It carries out the reaction adenosine + phosphate = alpha-D-ribose 1-phosphate + adenine. It catalyses the reaction S-methyl-5'-thioadenosine + phosphate = 5-(methylsulfanyl)-alpha-D-ribose 1-phosphate + adenine. The enzyme catalyses inosine + phosphate = alpha-D-ribose 1-phosphate + hypoxanthine. The catalysed reaction is adenosine + H2O + H(+) = inosine + NH4(+). Functionally, purine nucleoside enzyme that catalyzes the phosphorolysis of adenosine and inosine nucleosides, yielding D-ribose 1-phosphate and the respective free bases, adenine and hypoxanthine. Also catalyzes the phosphorolysis of S-methyl-5'-thioadenosine into adenine and S-methyl-5-thio-alpha-D-ribose 1-phosphate. Also has adenosine deaminase activity. The polypeptide is Purine nucleoside phosphorylase BT_4389 (Bacteroides thetaiotaomicron (strain ATCC 29148 / DSM 2079 / JCM 5827 / CCUG 10774 / NCTC 10582 / VPI-5482 / E50)).